The sequence spans 66 residues: Cold shock protein 2 (66 aa).

One can recognise a CSD domain in the interval 4 to 63 (GTVKWFNADKGFGFITGEDGTDVFVHFSAIQTDGFKTLDEGQKVTYDEEQGDRGPQATNV).

The protein resides in the cytoplasm. The protein is Cold shock protein 2 (cspL) of Lactiplantibacillus plantarum (strain ATCC BAA-793 / NCIMB 8826 / WCFS1) (Lactobacillus plantarum).